Reading from the N-terminus, the 286-residue chain is Bifunctional protein FolD (286 aa).

NADP(+) contacts are provided by residues 165 to 167 (GRS) and serine 190.

The protein belongs to the tetrahydrofolate dehydrogenase/cyclohydrolase family. As to quaternary structure, homodimer.

The catalysed reaction is (6R)-5,10-methylene-5,6,7,8-tetrahydrofolate + NADP(+) = (6R)-5,10-methenyltetrahydrofolate + NADPH. The enzyme catalyses (6R)-5,10-methenyltetrahydrofolate + H2O = (6R)-10-formyltetrahydrofolate + H(+). Its pathway is one-carbon metabolism; tetrahydrofolate interconversion. Functionally, catalyzes the oxidation of 5,10-methylenetetrahydrofolate to 5,10-methenyltetrahydrofolate and then the hydrolysis of 5,10-methenyltetrahydrofolate to 10-formyltetrahydrofolate. This Paraburkholderia phytofirmans (strain DSM 17436 / LMG 22146 / PsJN) (Burkholderia phytofirmans) protein is Bifunctional protein FolD.